Consider the following 1057-residue polypeptide: DNA-directed RNA polymerase subunit beta' (1057 aa).

Residues cysteine 60, cysteine 62, cysteine 75, and cysteine 78 each coordinate Zn(2+). Mg(2+) is bound by residues aspartate 449, aspartate 451, and aspartate 453. 4 residues coordinate Zn(2+): cysteine 822, cysteine 896, cysteine 903, and cysteine 906.

Belongs to the RNA polymerase beta' chain family. The RNAP catalytic core consists of 2 alpha, 1 beta, 1 beta' and 1 omega subunit. When a sigma factor is associated with the core the holoenzyme is formed, which can initiate transcription. The cofactor is Mg(2+). Zn(2+) serves as cofactor.

The enzyme catalyses RNA(n) + a ribonucleoside 5'-triphosphate = RNA(n+1) + diphosphate. Its function is as follows. DNA-dependent RNA polymerase catalyzes the transcription of DNA into RNA using the four ribonucleoside triphosphates as substrates. The chain is DNA-directed RNA polymerase subunit beta' from Staphylococcus aureus.